The following is a 334-amino-acid chain: Cytoskeleton protein RodZ (334 aa).

Residues 1 to 111 (MNTEATHDQN…LGKRRKKRDG (111 aa)) are Cytoplasmic-facing. Positions 19–71 (LRNAREQLGLSQQAVAERLCLKVSTVRDIEEDKAPSDLASTFLRGYIRSYARL) constitute an HTH cro/C1-type domain. Residues 30 to 49 (QQAVAERLCLKVSTVRDIEE) constitute a DNA-binding region (H-T-H motif). Residues 112–132 (WLMSFTWLVLFVVVGLTGAWW) form a helical; Signal-anchor for type II membrane protein membrane-spanning segment. Residues 133-334 (WQNHKAQQEE…TLNAEPTPAQ (202 aa)) are Periplasmic-facing. 2 disordered regions span residues 155–207 (NADK…ATQN) and 221–241 (ATSAAPAATETPSALPTSQAG). Low complexity predominate over residues 176 to 207 (TTPAQTAPAPATPVDSTAATQTPAATATATQN).

It belongs to the RodZ family.

The protein localises to the cell inner membrane. Functionally, cytoskeletal protein that is involved in cell-shape control through regulation of the length of the long axis. This Salmonella schwarzengrund (strain CVM19633) protein is Cytoskeleton protein RodZ.